The sequence spans 452 residues: MVGKIGFVSLGCPKALVDSELILTQLSAEGYETAKDYSGADLVVVNTCGFIDSAVEESLSAIGEALAENGKVIVTGCLGARKNADGSDLILSIHPKVLAVTGPHATDEVMQAIHLHLPKPHDPFTDLVPPAGVKLTPKHYAYLKISEGCNHRCTFCIIPSLRGDLVSRPIGEVLLEAKRLFESGVKELLVVSQDTSAYGVDIQYRTGFWDGKPVKTRMFDLVNALNQIAREHQAWVRLHYVYPYPHVDDILPLMAEFSEHGYGVLPYLDIPLQHAHPDVLKRMKRPASGEKNLERILAWREACPDLVIRSTFIAGFPGETEEEFEYLLNFLEEAQIDRAGCFAYSPVEGAKANELDNPVPDAVREERRARFMAKAEDISIKRLAKKIGKRVQVLIDRVDESGGIGRTIGDAPEIDGLVRVLPPTKPSKRYRTGEIIRATVISSQGHDLIAET.

The MTTase N-terminal domain occupies 3–118; sequence GKIGFVSLGC…VMQAIHLHLP (116 aa). Positions 12, 48, 77, 149, 153, and 156 each coordinate [4Fe-4S] cluster. Positions 135 to 381 constitute a Radical SAM core domain; it reads LTPKHYAYLK…MAKAEDISIK (247 aa). Positions 384-452 constitute a TRAM domain; that stretch reads AKKIGKRVQV…SQGHDLIAET (69 aa).

This sequence belongs to the methylthiotransferase family. RimO subfamily. [4Fe-4S] cluster serves as cofactor.

The protein localises to the cytoplasm. It catalyses the reaction L-aspartate(89)-[ribosomal protein uS12]-hydrogen + (sulfur carrier)-SH + AH2 + 2 S-adenosyl-L-methionine = 3-methylsulfanyl-L-aspartate(89)-[ribosomal protein uS12]-hydrogen + (sulfur carrier)-H + 5'-deoxyadenosine + L-methionine + A + S-adenosyl-L-homocysteine + 2 H(+). Catalyzes the methylthiolation of an aspartic acid residue of ribosomal protein uS12. This Polynucleobacter asymbioticus (strain DSM 18221 / CIP 109841 / QLW-P1DMWA-1) (Polynucleobacter necessarius subsp. asymbioticus) protein is Ribosomal protein uS12 methylthiotransferase RimO.